A 288-amino-acid polypeptide reads, in one-letter code: 2-hydroxy-6-oxononadienedioate/2-hydroxy-6-oxononatrienedioate hydrolase (288 aa).

His267 acts as the Proton acceptor in catalysis.

Belongs to the AB hydrolase superfamily. MhpC family. As to quaternary structure, homodimer.

It catalyses the reaction (2Z,4E)-2-hydroxy-6-oxonona-2,4-dienedioate + H2O = (2Z)-2-hydroxypenta-2,4-dienoate + succinate + H(+). It carries out the reaction (2Z,4E,7E)-2-hydroxy-6-oxonona-2,4,7-trienedioate + H2O = (2Z)-2-hydroxypenta-2,4-dienoate + fumarate + H(+). The protein operates within aromatic compound metabolism; 3-phenylpropanoate degradation. Functionally, catalyzes the cleavage of the C5-C6 bond of 2-hydroxy-6-oxononadienedioate and 2-hydroxy-6-oxononatrienedioate, a dienol ring fission product of the bacterial meta-cleavage pathway for degradation of phenylpropionic acid. This Escherichia coli O81 (strain ED1a) protein is 2-hydroxy-6-oxononadienedioate/2-hydroxy-6-oxononatrienedioate hydrolase.